We begin with the raw amino-acid sequence, 122 residues long: Large ribosomal subunit protein bL12 (122 aa).

It belongs to the bacterial ribosomal protein bL12 family. As to quaternary structure, homodimer. Part of the ribosomal stalk of the 50S ribosomal subunit. Forms a multimeric L10(L12)X complex, where L10 forms an elongated spine to which 2 to 4 L12 dimers bind in a sequential fashion. Binds GTP-bound translation factors.

In terms of biological role, forms part of the ribosomal stalk which helps the ribosome interact with GTP-bound translation factors. Is thus essential for accurate translation. This chain is Large ribosomal subunit protein bL12, found in Stutzerimonas stutzeri (strain A1501) (Pseudomonas stutzeri).